We begin with the raw amino-acid sequence, 693 residues long: Methionine--tRNA ligase (693 aa).

Positions P12–H22 match the 'HIGH' region motif. Zn(2+)-binding residues include C143, C146, C156, and C159. The 'KMSKS' region motif lies at K330–S334. ATP is bound at residue K333. Positions A557–E576 are disordered. In terms of domain architecture, tRNA-binding spans D590–R693.

It belongs to the class-I aminoacyl-tRNA synthetase family. MetG type 1 subfamily. As to quaternary structure, homodimer. Zn(2+) serves as cofactor.

It localises to the cytoplasm. The catalysed reaction is tRNA(Met) + L-methionine + ATP = L-methionyl-tRNA(Met) + AMP + diphosphate. Is required not only for elongation of protein synthesis but also for the initiation of all mRNA translation through initiator tRNA(fMet) aminoacylation. The polypeptide is Methionine--tRNA ligase (Stenotrophomonas maltophilia (strain R551-3)).